We begin with the raw amino-acid sequence, 65 residues long: Small ribosomal subunit protein bS21 (65 aa).

Residues 46 to 57 are compositionally biased toward basic residues; the sequence is RLKRSRSKRRAQ. The disordered stretch occupies residues 46–65; the sequence is RLKRSRSKRRAQRANEERNS.

This sequence belongs to the bacterial ribosomal protein bS21 family.

This chain is Small ribosomal subunit protein bS21, found in Chlorobaculum tepidum (strain ATCC 49652 / DSM 12025 / NBRC 103806 / TLS) (Chlorobium tepidum).